The following is a 207-amino-acid chain: Transcriptional regulator YqjI (207 aa).

Over residues 1–40 (MSHHHEGCCKHEGQPRHEGCCKGEKSEHEHCGHGHQHEHG) the composition is skewed to basic and acidic residues. Residues 1–46 (MSHHHEGCCKHEGQPRHEGCCKGEKSEHEHCGHGHQHEHGQCCGGR) are disordered.

As to quaternary structure, oligomer (probable predominant form) and monomer.

Its activity is regulated as follows. Divalent metals such as nickel and iron have a similar negative effect on YqjI DNA-binding activity. Functionally, represses the expression of YqjH which is involved in iron homeostasis under excess nickel conditions. Also represses its own expression. The polypeptide is Transcriptional regulator YqjI (yqjI) (Escherichia coli (strain K12)).